The chain runs to 1449 residues: Disease resistance protein RPP5 (1449 aa).

The TIR domain occupies 10-178 (RRYDVFPSFS…KISNDVSNKL (169 aa)). Residue Glu-85 is part of the active site. Residues 192-446 (EAHIEAIKSV…IACLFNGFEV (255 aa)) enclose the NB-ARC domain. 19 LRR repeats span residues 549–573 (MRNLQYLKIGDWSDGGQPQSLVYLP), 574–595 (LKLRLLDWDDCPLKSLPSTFKA), 597–618 (YLVNLIMKYSKLEKLWEGTLPL), 619–642 (GSLKKMNLLCSKNLKEIPDLSNAR), 644–665 (LEELDLEGCESLVTLPSSIQNA), 687–710 (MCNLEYLSVDCSRVEGTQGIVYFP), 712–732 (KLRLLLWNNCPLKRLHSNFKV), 733–755 (EYLVKLRMENSDLEKLWDGTQPL), 756–779 (GRLKQMFLRGSKYLKEIPDLSLAI), 802–825 (AIKLIYLDISDCKKLESFPTDLNL), 826–849 (ESLEYLNLTGCPNLRNFPAIKMGC), 915–939 (LGSLEEMDLSESENLTEIPDLSKAT), 941–962 (LKHLYLNNCKSLVTLPSTIGNL), 963–985 (QKLVRLEMKECTGLEVLPTDVNL), 986–1011 (SSLETLDLSGCSSLRTFPLISKSIKW), 1028–1052 (ATKLESLILNNCKSLVTLPSTIGNL), 1053–1077 (QNLRRLYMKRCTGLEVLPTDVNLSS), 1096–1119 (STNIVWLYLENTAIGEVPCCIEDF), and 1120–1143 (TRLRVLLMYCCQRLKNISPNIFRL).

In terms of assembly, interacts with RSH1.

It catalyses the reaction NAD(+) + H2O = ADP-D-ribose + nicotinamide + H(+). In terms of biological role, TIR-NB-LRR receptor-like protein that confers resistance to the pathogen Hyaloperonospora arabidopsis isolate Noco2 (downy mildew disease). Confers resistance to H.arabidopsis isolates Emoy2, Emwa1 and Noco2. This chain is Disease resistance protein RPP5, found in Arabidopsis thaliana (Mouse-ear cress).